The following is a 256-amino-acid chain: MANSPVMNVEVLRYNPEIDQEPHLSTYQVPYDNQTSLLDALGYIKDKLEPSLSYRWSCRMAICGSCGMMVNNKPKLACKTFLRDYSGHMRIEPLANFPIERDLVVDLSHFIESLEAIKPYIIGNEAPALDGKPHPSKELQVSRTKQTPAQLEKYRQFSMCINCGLCYAACPQFGLNPEFLGPAAITMAHRYNLDNRDHGKAKRMSLLNGKNGVWSCTFVGYCSEVCPKHVDPASAINQGKVESAKDYVISMLKPKG.

In terms of domain architecture, 2Fe-2S ferredoxin-type spans 7–97; sequence MNVEVLRYNP…HMRIEPLANF (91 aa). Tyrosine 14 serves as a coordination point for a menaquinone. Cysteine 58, cysteine 63, cysteine 66, and cysteine 78 together coordinate [2Fe-2S] cluster. The 4Fe-4S ferredoxin-type domain maps to 151-180; sequence LEKYRQFSMCINCGLCYAACPQFGLNPEFL. [4Fe-4S] cluster contacts are provided by cysteine 160, cysteine 163, and cysteine 166. Residues cysteine 170, cysteine 216, and cysteine 222 each contribute to the [3Fe-4S] cluster site. Residue cysteine 226 participates in [4Fe-4S] cluster binding. Position 237–240 (237–240) interacts with a menaquinone; that stretch reads NQGK.

The protein belongs to the succinate dehydrogenase/fumarate reductase iron-sulfur protein family. In terms of assembly, fumarate dehydrogenase forms part of an enzyme complex containing four subunits: a flavoprotein, an iron-sulfur, and two hydrophobic anchor proteins. Requires [2Fe-2S] cluster as cofactor. The cofactor is [3Fe-4S] cluster. It depends on [4Fe-4S] cluster as a cofactor.

Its subcellular location is the cell inner membrane. It catalyses the reaction a quinone + succinate = fumarate + a quinol. The catalysed reaction is a menaquinone + succinate = a menaquinol + fumarate. The protein is Fumarate reductase iron-sulfur subunit (frdB) of Haemophilus influenzae (strain ATCC 51907 / DSM 11121 / KW20 / Rd).